The sequence spans 103 residues: Large ribosomal subunit protein bL21 (103 aa).

Belongs to the bacterial ribosomal protein bL21 family. Part of the 50S ribosomal subunit. Contacts protein L20.

Its function is as follows. This protein binds to 23S rRNA in the presence of protein L20. The chain is Large ribosomal subunit protein bL21 from Mycobacterium sp. (strain JLS).